Reading from the N-terminus, the 366-residue chain is Ribosomal RNA large subunit methyltransferase M (366 aa).

Residues Ser188, 221-224 (CPGG), Asp240, Asp260, and Asp277 contribute to the S-adenosyl-L-methionine site. Lys306 acts as the Proton acceptor in catalysis.

The protein belongs to the class I-like SAM-binding methyltransferase superfamily. RNA methyltransferase RlmE family. RlmM subfamily. As to quaternary structure, monomer.

Its subcellular location is the cytoplasm. The catalysed reaction is cytidine(2498) in 23S rRNA + S-adenosyl-L-methionine = 2'-O-methylcytidine(2498) in 23S rRNA + S-adenosyl-L-homocysteine + H(+). Catalyzes the 2'-O-methylation at nucleotide C2498 in 23S rRNA. This Citrobacter koseri (strain ATCC BAA-895 / CDC 4225-83 / SGSC4696) protein is Ribosomal RNA large subunit methyltransferase M.